Here is a 396-residue protein sequence, read N- to C-terminus: Elongation factor Tu (396 aa).

Positions 10–205 (KPHVNIGTIG…AVDESIPDPV (196 aa)) constitute a tr-type G domain. A G1 region spans residues 19 to 26 (GHVDHGKT). 19 to 26 (GHVDHGKT) contributes to the GTP binding site. Residue Thr26 coordinates Mg(2+). Residues 62-66 (GITIN) form a G2 region. Residues 83 to 86 (DAPG) form a G3 region. GTP is bound by residues 83–87 (DAPGH) and 138–141 (NKAD). Residues 138 to 141 (NKAD) are G4. The tract at residues 175 to 177 (SAL) is G5.

It belongs to the TRAFAC class translation factor GTPase superfamily. Classic translation factor GTPase family. EF-Tu/EF-1A subfamily. Monomer.

The protein resides in the cytoplasm. The enzyme catalyses GTP + H2O = GDP + phosphate + H(+). In terms of biological role, GTP hydrolase that promotes the GTP-dependent binding of aminoacyl-tRNA to the A-site of ribosomes during protein biosynthesis. The sequence is that of Elongation factor Tu from Mycobacterium avium (strain 104).